The sequence spans 176 residues: MSKRAVIRFLGVAGLVLSGATVMGLIGGYRVNVTPSEPLGLWRVEKLRRPVQSGDLVFVCPPHNAFFEEAWLRGYLRSGLCPGWFAPLIKSVLALPGQRVEIADRIVIDGHPVSASTVSATDSEGRAIAPFAGGVVPPGFLFLHSSFASSYDSRYFGPIPDSGLLGLARPVFTFDP.

A signal peptide spans 1 to 24; the sequence is MSKRAVIRFLGVAGLVLSGATVMG.

Belongs to the peptidase S26C family.

It is found in the periplasm. Involved in conjugal transfer of the plasmid. The sequence is that of Conjugal transfer protein TraF (traF) from Agrobacterium fabrum (strain C58 / ATCC 33970) (Agrobacterium tumefaciens (strain C58)).